Reading from the N-terminus, the 751-residue chain is Proton-associated sugar transporter A (751 aa).

Transmembrane regions (helical) follow at residues 93–113, 123–143, 155–175, 191–211, 233–253, and 268–288; these read ILFG…PVLL, SLVW…LGAW, RPFI…LLNG, WGIL…DSAD, IHAL…GIHW, and VIYV…LISI. The residue at position 500 (Thr500) is a Phosphothreonine. Transmembrane regions (helical) follow at residues 536-556, 576-596, 606-626, 630-650, 688-708, and 710-730; these read GWLS…EVVF, VTMG…YSAI, VRTL…LATL, LYVV…LCTL, FLAQ…VGSA, and GVMY…SLCV.

Belongs to the glycoside-pentoside-hexuronide (GPH) cation symporter transporter (TC 2.A.2) family.

It localises to the membrane. The catalysed reaction is D-galactose(in) + H(+)(in) = D-galactose(out) + H(+)(out). The enzyme catalyses D-glucose(out) + H(+)(out) = D-glucose(in) + H(+)(in). Proton-associated glucose transporter in the brain. This is Proton-associated sugar transporter A from Mus musculus (Mouse).